Consider the following 283-residue polypeptide: Probable endonuclease 4 (283 aa).

Zn(2+) is bound by residues His67, His107, Glu144, Asp178, His181, His215, Asp228, His230, and Glu260.

This sequence belongs to the AP endonuclease 2 family. The cofactor is Zn(2+).

The enzyme catalyses Endonucleolytic cleavage to 5'-phosphooligonucleotide end-products.. Its function is as follows. Endonuclease IV plays a role in DNA repair. It cleaves phosphodiester bonds at apurinic or apyrimidinic (AP) sites, generating a 3'-hydroxyl group and a 5'-terminal sugar phosphate. In Geobacter sp. (strain M21), this protein is Probable endonuclease 4.